The following is a 69-amino-acid chain: Small, acid-soluble spore protein I (69 aa).

This sequence belongs to the SspI family.

It is found in the spore core. The sequence is that of Small, acid-soluble spore protein I from Bacillus mycoides (strain KBAB4) (Bacillus weihenstephanensis).